Reading from the N-terminus, the 183-residue chain is Capsid protein (183 aa).

Residues 136 to 183 (NAPILSTLPETTVVRRRGRSPRRRTPSPRRRRSQSPRRRRSQSPASQC) are disordered. The span at 149–176 (VRRRGRSPRRRTPSPRRRRSQSPRRRRS) shows a compositional bias: basic residues. Ser155, Ser162, and Ser170 each carry phosphoserine; by host. The 1; half-length repeat unit spans residues 155–161 (SPRRRTP). Residues 155–177 (SPRRRTPSPRRRRSQSPRRRRSQ) form a 3 X 8 AA repeats of S-P-R-R-R-[PR]-S-Q region. The Bipartite nuclear localization signal signature appears at 158–175 (RRTPSPRRRRSQSPRRRR). 2 tandem repeats follow at residues 162-169 (SPRRRRSQ) and 170-177 (SPRRRRSQ). The segment at 177-183 (QSPASQC) is RNA binding.

It belongs to the orthohepadnavirus core antigen family. Homodimerizes, then multimerizes. Interacts with cytosol exposed regions of viral L glycoprotein present in the reticulum-to-Golgi compartment. Interacts with human FLNB. Phosphorylated form interacts with host importin alpha; this interaction depends on the exposure of the NLS, which itself depends upon genome maturation and/or phosphorylation of the capsid protein. Interacts with host NUP153. Post-translationally, phosphorylated by host SRPK1, SRPK2, and maybe protein kinase C or GAPDH. Phosphorylation is critical for pregenomic RNA packaging. Protein kinase C phosphorylation is stimulated by HBx protein and may play a role in transport of the viral genome to the nucleus at the late step during the viral replication cycle.

The protein localises to the virion. The protein resides in the host cytoplasm. Self assembles to form an icosahedral capsid. Most capsids appear to be large particles with an icosahedral symmetry of T=4 and consist of 240 copies of capsid protein, though a fraction forms smaller T=3 particles consisting of 180 capsid proteins. Entering capsids are transported along microtubules to the nucleus. Phosphorylation of the capsid is thought to induce exposure of nuclear localization signal in the C-terminal portion of the capsid protein that allows binding to the nuclear pore complex via the importin (karyopherin-) alpha and beta. Capsids are imported in intact form through the nuclear pore into the nuclear basket, where it probably binds NUP153. Only capsids that contain the mature viral genome can release the viral DNA and capsid protein into the nucleoplasm. Immature capsids get stuck in the basket. Capsids encapsulate the pre-genomic RNA and the P protein. Pre-genomic RNA is reverse-transcribed into DNA while the capsid is still in the cytoplasm. The capsid can then either be directed to the nucleus, providing more genomes for transcription, or bud through the endoplasmic reticulum to provide new virions. This is Capsid protein from Pan troglodytes (Chimpanzee).